Reading from the N-terminus, the 263-residue chain is 3-methyl-2-oxobutanoate hydroxymethyltransferase (263 aa).

The Mg(2+) site is built by aspartate 45 and aspartate 84. 3-methyl-2-oxobutanoate-binding positions include 45–46, aspartate 84, and lysine 112; that span reads DS. Glutamate 114 lines the Mg(2+) pocket. Glutamate 181 functions as the Proton acceptor in the catalytic mechanism.

The protein belongs to the PanB family. Homodecamer; pentamer of dimers. Mg(2+) serves as cofactor.

Its subcellular location is the cytoplasm. The catalysed reaction is 3-methyl-2-oxobutanoate + (6R)-5,10-methylene-5,6,7,8-tetrahydrofolate + H2O = 2-dehydropantoate + (6S)-5,6,7,8-tetrahydrofolate. Its pathway is cofactor biosynthesis; (R)-pantothenate biosynthesis; (R)-pantoate from 3-methyl-2-oxobutanoate: step 1/2. Catalyzes the reversible reaction in which hydroxymethyl group from 5,10-methylenetetrahydrofolate is transferred onto alpha-ketoisovalerate to form ketopantoate. This is 3-methyl-2-oxobutanoate hydroxymethyltransferase from Photorhabdus laumondii subsp. laumondii (strain DSM 15139 / CIP 105565 / TT01) (Photorhabdus luminescens subsp. laumondii).